The sequence spans 157 residues: GDP-mannose mannosyl hydrolase (157 aa).

Residues 2–3 (FL), F8, and R36 contribute to the substrate site. The Nudix hydrolase domain occupies 3 to 153 (LRQEDFAAVV…SRAYFSPDAP (151 aa)). Mg(2+)-binding residues include G49, E69, and Q122. Residues 50–71 (GRVCKDETLEAAFARLTQAELG) carry the Nudix box motif.

It belongs to the Nudix hydrolase family. Homodimer. The cofactor is Mg(2+).

The catalysed reaction is GDP-alpha-D-mannose + H2O = D-mannose + GDP + H(+). Functionally, hydrolyzes GDP-mannose. This is GDP-mannose mannosyl hydrolase from Salmonella typhi.